We begin with the raw amino-acid sequence, 185 residues long: Ribosome-recycling factor (185 aa).

This sequence belongs to the RRF family.

Its subcellular location is the cytoplasm. Its function is as follows. Responsible for the release of ribosomes from messenger RNA at the termination of protein biosynthesis. May increase the efficiency of translation by recycling ribosomes from one round of translation to another. The polypeptide is Ribosome-recycling factor (Clostridium novyi (strain NT)).